Reading from the N-terminus, the 692-residue chain is Protein adenylyltransferase SelO-1, mitochondrial (692 aa).

Residues 1 to 24 (MASVGSRLTRFYISRPGVIARRFL) constitute a mitochondrion transit peptide. ATP contacts are provided by Gly142, Gly144, Lys176, Asp188, Gly189, Arg246, and Arg253. Catalysis depends on Asp337, which acts as the Proton acceptor. Residues Asn338 and Asp347 each coordinate Mg(2+). Residue Asp347 participates in ATP binding. Residues 637–676 (LEQPGWMGRGGAAIPGERDETEEEGSNSSGAGARGLVPYD) are disordered. Residue Sec690 is a non-standard amino acid, selenocysteine.

Belongs to the SELO family. Mg(2+) serves as cofactor.

The protein resides in the mitochondrion. The enzyme catalyses L-tyrosyl-[protein] + ATP = O-(5'-adenylyl)-L-tyrosyl-[protein] + diphosphate. It carries out the reaction L-threonyl-[protein] + ATP = 3-O-(5'-adenylyl)-L-threonyl-[protein] + diphosphate. It catalyses the reaction L-seryl-[protein] + ATP = 3-O-(5'-adenylyl)-L-seryl-[protein] + diphosphate. Catalyzes the transfer of adenosine 5'-monophosphate (AMP) to Ser, Thr and Tyr residues of target proteins (AMPylation). May be a redox-active mitochondrial selenoprotein which interacts with a redox target protein. The chain is Protein adenylyltransferase SelO-1, mitochondrial from Danio rerio (Zebrafish).